The sequence spans 394 residues: MSGEDEQQEQTIAEDLVVTKYKMGGDIANRVLRSLVEASSSGVSVLSLCEKGDAMIMEETGKIFKKEKEMKKGIAFPTSISVNNCVCHFSPLKSDQDYILKEGDLVKIDLGVHVDGFIANVAHTFVVDVAQGTQVTGRKADVIKAAHLCAEAALRLVKPGNQNTQVTEAWNKVAHSFNCTPIEGMLSHQLKQHVIDGEKTIIQNPTDQQKKDHEKAEFEVHEVYAVDVLVSSGEGKAKDAGQRTTIYKRDPSKQYGLKMKTSRAFFSEVERRFDAMPFTLRAFEDEKKARMGVVECAKHELLQPFNVLYEKEGEFVAQFKFTVLLMPNGPMRITSGPFEPDLYKSEMEVQDAELKALLQSSASRKTQKKKKKKASKTAENATSGETLEENEAGD.

Ser2 is modified (N-acetylserine). Ser2 carries the phosphoserine modification. The segment at Ser2–Leu48 is necessary for nucleolar localization. Residues Leu46 to Ala54 are RNA-binding. A Glycyl lysine isopeptide (Lys-Gly) (interchain with G-Cter in SUMO2) cross-link involves residue Lys298. Positions Leu301–Asp394 are necessary for nucleolar localization. Residue Ser335 is modified to Phosphoserine. A disordered region spans residues Leu358–Asp394. Position 361 is a phosphoserine; by PKC/PRKCD (Ser361). An interaction with RNA region spans residues Ser361–Ser375. Over residues Lys365–Ser375 the composition is skewed to basic residues. Residues Thr366 and Thr386 each carry the phosphothreonine modification.

The protein belongs to the peptidase M24 family. In terms of assembly, isoform 2 interacts with the cytoplasmic domain of non-phosphorylated ERBB3; the interaction requires PKC activity. Interacts with AR. Treatment with HRG leads to dissociation from ERBB3 and increases association with AR. Interacts with NCL/nucleolin. Component of a ribonucleoprotein complex containing at least PA2G4, NCL, TOP1, PABPC2, RPLP0, acetylated histone H1 (HIST1H1A or H1F1), histone H1 2/4, RPL4, RPL8, RPL15, RPL18, RPL18A, RPL21, RPL11, RPL12, RPL28, RPL27, RPLP2 and RPL24. Interacts with HDAC2. Interacts with RB1; the interaction is enhanced upon PA2G4 dephosphorylation. Interacts with AKT1. Isoform 1 and isoform 2 interact with RNF20. Isoform 2 interacts with HUWE1. Interacts with DNAJC21. Phosphorylated on serine and threonine residues. Phosphorylation is enhanced by HRG treatment. Basal phosphorylation is PKC-dependent and HRG-induced phosphorylation is predominantly PKC-independent. Phosphorylation at Ser-361 by PKC/PRKCD regulates its nucleolar localization. Post-translationally, in cancer cells, isoform 2 is polyubiquitinated leading to its proteasomal degradation and phosphorylation by PKC/PRKCD enhances polyubiquitination. In terms of tissue distribution, isoform 2 is undetectable whereas isoform 1 is strongly expressed in cancer cells (at protein level). Isoform 1 and isoform 2 are widely expressed, including heart, brain, lung, pancreas, skeletal muscle, kidney, placenta and liver.

It is found in the cytoplasm. The protein localises to the nucleus. It localises to the nucleolus. In terms of biological role, may play a role in a ERBB3-regulated signal transduction pathway. Seems be involved in growth regulation. Acts a corepressor of the androgen receptor (AR) and is regulated by the ERBB3 ligand neuregulin-1/heregulin (HRG). Inhibits transcription of some E2F1-regulated promoters, probably by recruiting histone acetylase (HAT) activity. Binds RNA. Associates with 28S, 18S and 5.8S mature rRNAs, several rRNA precursors and probably U3 small nucleolar RNA. May be involved in regulation of intermediate and late steps of rRNA processing. May be involved in ribosome assembly. Mediates cap-independent translation of specific viral IRESs (internal ribosomal entry site). Regulates cell proliferation, differentiation, and survival. Isoform 1 suppresses apoptosis whereas isoform 2 promotes cell differentiation. The sequence is that of Proliferation-associated protein 2G4 (PA2G4) from Homo sapiens (Human).